Reading from the N-terminus, the 516-residue chain is Histidine ammonia-lyase 1 (516 aa).

Residues 147–149 (SSG) constitute a cross-link (5-imidazolinone (Ser-Gly)). Serine 148 carries the 2,3-didehydroalanine (Ser) modification.

It belongs to the PAL/histidase family. Post-translationally, contains an active site 4-methylidene-imidazol-5-one (MIO), which is formed autocatalytically by cyclization and dehydration of residues Ser-Ser-Gly.

Its subcellular location is the cytoplasm. It carries out the reaction L-histidine = trans-urocanate + NH4(+). Its pathway is amino-acid degradation; L-histidine degradation into L-glutamate; N-formimidoyl-L-glutamate from L-histidine: step 1/3. This chain is Histidine ammonia-lyase 1 (hutH1), found in Fusobacterium nucleatum subsp. nucleatum (strain ATCC 25586 / DSM 15643 / BCRC 10681 / CIP 101130 / JCM 8532 / KCTC 2640 / LMG 13131 / VPI 4355).